The sequence spans 129 residues: Phenazine antibiotic resistance protein EhpR (129 aa).

The VOC domain maps to Thr10–Leu128. D-alanylgriseoluteate contacts are provided by residues Arg42–Tyr43 and Trp57.

In terms of assembly, homodimer.

Its function is as follows. Required for resistance to the phenazine antibiotic D-alanylgriseoluteic acid (AGA), an antibiotic produced by E.agglomerans itself, and thus protects the bacterium against phenazine toxicity. Probably binds AGA and acts as a chaperone that works in tandem with a membrane transporter for subsequent antibiotic secretion. This Enterobacter agglomerans (Erwinia herbicola) protein is Phenazine antibiotic resistance protein EhpR.